Here is a 323-residue protein sequence, read N- to C-terminus: MYHSSSQKRHWTFASEEQLARLRADANRKFKCKAVANGKVLPNDPVFLEPHEELTLCKYYEKRLLEFCSVFKPAMPRSVVGTACMYFKRFYLNNSVMEYHPRIIMLTCAFLACKVDEFNVSSPQFVGNLRESPLGQERALEQILEYELLLIQQLNFHLIVHNPYRPFEGFLIDIKTRYPMLENPEILRKTADDFLSRIALTDAYLLYTPSQIALTAILSSASRAGITMESYLSESLMLKENRTCLSQLLDIMKSMRNLVKKYEPPRSDEVAVLKQKLERCHSSDLALNAVTKKRKGYEDDDYVSKKPKQEEEEWTDDDLVDSL.

A Phosphoserine; by CDK8 modification is found at Ser5. Residue Ser132 is modified to Phosphoserine. The disordered stretch occupies residues 295–323 (KGYEDDDYVSKKPKQEEEEWTDDDLVDSL). The residue at position 304 (Ser304) is a Phosphoserine; by CDK8. Residues 310 to 323 (EEEEWTDDDLVDSL) show a composition bias toward acidic residues. The residue at position 315 (Thr315) is a Phosphothreonine. A Phosphoserine modification is found at Ser322.

The protein belongs to the cyclin family. Cyclin C subfamily. As to quaternary structure, associates primarily with CDK7 and MAT1 to form the CAK complex. CAK can further associate with the core-TFIIH to form the TFIIH basal transcription factor. In terms of tissue distribution, expressed in both the germinal and somatic cells of the testis.

It is found in the nucleus. Its function is as follows. Regulates CDK7, the catalytic subunit of the CDK-activating kinase (CAK) enzymatic complex. CAK activates the cyclin-associated kinases CDK1, CDK2, CDK4 and CDK6 by threonine phosphorylation. CAK complexed to the core-TFIIH basal transcription factor activates RNA polymerase II by serine phosphorylation of the repetitive C-terminal domain (CTD) of its large subunit (POLR2A), allowing its escape from the promoter and elongation of the transcripts. Involved in cell cycle control and in RNA transcription by RNA polymerase II. Its expression and activity are constant throughout the cell cycle. The polypeptide is Cyclin-H (Ccnh) (Mus musculus (Mouse)).